The sequence spans 141 residues: Hemoglobin subunit alpha-D (141 aa).

In terms of domain architecture, Globin spans 1 to 141; that stretch reads MLTAEDKKLI…VAAVLAEKYR (141 aa). His-58 and His-87 together coordinate heme b.

This sequence belongs to the globin family. As to quaternary structure, heterotetramer of two alpha-D chains and two beta chains. Red blood cells.

Functionally, involved in oxygen transport from the lung to the various peripheral tissues. This Accipiter gentilis (Northern goshawk) protein is Hemoglobin subunit alpha-D (HBAD).